The primary structure comprises 476 residues: Cytochrome c oxidase subunit 1 (476 aa).

A helical membrane pass occupies residues 19–39 (LYYLWFSFLFGIYGFLLSVIL). Glu42 is a Ca(2+) binding site. 8 helical membrane passes run 61-81 (MIFTVHGIIMIFFNIMPGLFG), 105-125 (ISLLLQPIAFILVILSTAAEF), 144-164 (LSPVAVDVIVIGLLVSGIASI), 194-214 (LIITSIMLLLTLPVLTGGVLM), 240-260 (LLWFFGHPEVYILILPAFGII), 278-298 (MILAMGCIAVLGSVVWVHHMY), 309-329 (FFTSTTILISIPTGTKVFNWL), and 345-365 (LLSLLFICTFTFGGTTGVILG). A Fe(II)-heme a-binding site is contributed by His66. His246 is a Cu cation binding site. Residues 246–250 (HPEVY) constitute a cross-link (1'-histidyl-3'-tyrosine (His-Tyr)). Residue Tyr250 participates in O2 binding. 2 residues coordinate Cu cation: His295 and His296. The Mg(2+) site is built by His374 and Asp375. Helical transmembrane passes span 379–399 (VIAHFHFVLSIGAIIALFTSV) and 415–435 (TIIVLWSILFFVGVVLTFLPM). His382 contributes to the heme a3 binding site. His384 provides a ligand contact to Fe(II)-heme a. Ca(2+) is bound at residue Pro448. A helical transmembrane segment spans residues 455–475 (NGWNMICSIGSTMTLFGLLIF).

This sequence belongs to the heme-copper respiratory oxidase family. In terms of assembly, component of the cytochrome c oxidase (complex IV, CIV), a multisubunit enzyme composed of a catalytic core of 3 subunits and several supernumerary subunits. The complex exists as a monomer or a dimer and forms supercomplexes (SCs) in the inner mitochondrial membrane with ubiquinol-cytochrome c oxidoreductase (cytochrome b-c1 complex, complex III, CIII). Heme is required as a cofactor. It depends on Cu cation as a cofactor.

It localises to the mitochondrion inner membrane. The catalysed reaction is 4 Fe(II)-[cytochrome c] + O2 + 8 H(+)(in) = 4 Fe(III)-[cytochrome c] + 2 H2O + 4 H(+)(out). Its pathway is energy metabolism; oxidative phosphorylation. Its function is as follows. Component of the cytochrome c oxidase, the last enzyme in the mitochondrial electron transport chain which drives oxidative phosphorylation. The respiratory chain contains 3 multisubunit complexes succinate dehydrogenase (complex II, CII), ubiquinol-cytochrome c oxidoreductase (cytochrome b-c1 complex, complex III, CIII) and cytochrome c oxidase (complex IV, CIV), that cooperate to transfer electrons derived from NADH and succinate to molecular oxygen, creating an electrochemical gradient over the inner membrane that drives transmembrane transport and the ATP synthase. Cytochrome c oxidase is the component of the respiratory chain that catalyzes the reduction of oxygen to water. Electrons originating from reduced cytochrome c in the intermembrane space (IMS) are transferred via the dinuclear copper A center (CU(A)) of subunit 2 and heme A of subunit 1 to the active site in subunit 1, a binuclear center (BNC) formed by heme A3 and copper B (CU(B)). The BNC reduces molecular oxygen to 2 water molecules using 4 electrons from cytochrome c in the IMS and 4 protons from the mitochondrial matrix. The sequence is that of Cytochrome c oxidase subunit 1 (COI) from Plasmodium chabaudi.